The sequence spans 641 residues: Methionine--tRNA ligase (641 aa).

Positions 13–23 (YYPSAKLHIGN) match the 'HIGH' region motif. 4 residues coordinate Zn(2+): cysteine 128, cysteine 131, cysteine 145, and cysteine 148. Positions 298 to 302 (KMSKS) match the 'KMSKS' region motif. Lysine 301 contributes to the ATP binding site. The 103-residue stretch at 539–641 (DFDKIDLRVV…GELPTGSQVR (103 aa)) folds into the tRNA-binding domain.

Belongs to the class-I aminoacyl-tRNA synthetase family. MetG type 2A subfamily. As to quaternary structure, homodimer. Requires Zn(2+) as cofactor.

The protein resides in the cytoplasm. The catalysed reaction is tRNA(Met) + L-methionine + ATP = L-methionyl-tRNA(Met) + AMP + diphosphate. Its function is as follows. Is required not only for elongation of protein synthesis but also for the initiation of all mRNA translation through initiator tRNA(fMet) aminoacylation. The chain is Methionine--tRNA ligase from Clostridium tetani (strain Massachusetts / E88).